Consider the following 42-residue polypeptide: Large ribosomal subunit protein bL36 (42 aa).

This sequence belongs to the bacterial ribosomal protein bL36 family.

The sequence is that of Large ribosomal subunit protein bL36 from Wolbachia sp. subsp. Brugia malayi (strain TRS).